The following is a 347-amino-acid chain: Phosphoribosylformylglycinamidine cyclo-ligase (347 aa).

Belongs to the AIR synthase family.

The protein resides in the cytoplasm. It catalyses the reaction 2-formamido-N(1)-(5-O-phospho-beta-D-ribosyl)acetamidine + ATP = 5-amino-1-(5-phospho-beta-D-ribosyl)imidazole + ADP + phosphate + H(+). It functions in the pathway purine metabolism; IMP biosynthesis via de novo pathway; 5-amino-1-(5-phospho-D-ribosyl)imidazole from N(2)-formyl-N(1)-(5-phospho-D-ribosyl)glycinamide: step 2/2. This is Phosphoribosylformylglycinamidine cyclo-ligase from Yersinia pseudotuberculosis serotype IB (strain PB1/+).